The following is a 1720-amino-acid chain: TOG array regulator of axonemal microtubules protein 1 (1720 aa).

2 TOG regions span residues 94–312 (EEDT…RRLE) and 352–596 (PQEL…MPSS). HEAT repeat units follow at residues 175–212 (AFSLALLPQLVVSLREENPALRKDALQILHICLKRSPG), 214–247 (VLRTLIQQGLESTDARLRASTALLLPILLTTEDL), 251–289 (LDLTEVIISLARKLGDQETEEESETAFSALQQIGERLGQ), 345–384 (NLKFGIIPQELHSRLLDQEDYKNRTQAVEELKQVLGKFNP), 390–427 (SSLVGFISLLYNLLDDSNFKVVHGTLEVLHLLVIRLGE), 431–466 (QFLGPVIAASVKVLADNKLVIKQEYMKIFLKLMKEV), 467–504 (GPQQVLCLLLEHLKHKHSRVREEVVNICICSLLTYPSE), and 506–543 (FDLPKLSFDLAPALVDSKRRVRQAALEAFAVLASSMGS). 4 stretches are compositionally biased toward polar residues: residues 794–809 (FGSQTECTSSNGQNPS), 819–829 (PVSSPRTSPKH), 842–852 (DNSVNFSNSWP), and 868–877 (LVSQKSSDPT). Disordered regions lie at residues 794 to 924 (FGSQ…SLLP), 970 to 998 (HSSLRSLRNSAAKKRAKLSGSTSDLESPD), and 1067 to 1087 (KKISHIAEQSPSAGSSSNPQQ). A compositionally biased stretch (polar residues) spans 1073–1087 (AEQSPSAGSSSNPQQ). The segment at 1256 to 1425 (EIALTEALRL…YIKDSVRNLQ (170 aa)) is TOG 3. 2 HEAT repeats span residues 1294–1331 (TKLHETNFAVVQEVKNLRSGVSRAAVVCLSDLFTYLKK) and 1335–1372 (QELDTTVKVLLHKAGESNTFIREDVDKALRAMVNNVTP). A disordered region spans residues 1430 to 1462 (GEIPLDTPSAKGRRSHTGSVGNTRSSSVSRDAF). Over residues 1446-1458 (TGSVGNTRSSSVS) the composition is skewed to polar residues. The tract at residues 1484 to 1720 (SLESAEYLKL…LLDMTILNEL (237 aa)) is TOG 4. HEAT repeat units follow at residues 1485 to 1522 (LESAEYLKLITGLLNAKDFRDRINGIKQLLSDTENNQD), 1526 to 1563 (GNIVKIFDAFKSRLHDSNSKVNLVALETMHKMIPLLRD), and 1567 to 1605 (PIINMLIPAIVDNNLNSKNPGIYAAATNVVQALSQHVDN).

This sequence belongs to the Crescerin family. Interacts with ARMC9, CCDC66, CEP104 and CSPP1.

Its subcellular location is the cell projection. It is found in the cilium. The protein localises to the cytoplasm. It localises to the cytoskeleton. The protein resides in the cilium axoneme. Functionally, involved in ciliogenesis. It is required for appropriate acetylation and polyglutamylation of ciliary microtubules, and regulation of cilium length. Interacts with microtubules and promotes microtubule polymerization via its HEAT repeat domains, especially those in TOG region 2 and 4. The sequence is that of TOG array regulator of axonemal microtubules protein 1 from Homo sapiens (Human).